Reading from the N-terminus, the 905-residue chain is Patched domain-containing protein 3 (905 aa).

Positions 1 to 67 (MISSKVAPGE…PVGQEAPPPR (67 aa)) are disordered. The helical transmembrane segment at 94–114 (WLFLLGPVLLTASLGTGLIFL) threads the bilayer. 4 N-linked (GlcNAc...) asparagine glycosylation sites follow: Asn-146, Asn-199, Asn-229, and Asn-233. A run of 6 helical transmembrane segments spans residues 337–357 (TVIP…VVSC), 369–389 (VAVF…GLML), 391–411 (IGVP…GVGV), 441–461 (VAVS…TGIT), 475–495 (GTTL…IMAL), and 558–578 (FIVV…CFQV). The region spanning 338-495 (VIPLFHLAYI…ITCFGAIMAL (158 aa)) is the SSD domain. N-linked (GlcNAc...) asparagine glycans are attached at residues Asn-647, Asn-661, and Asn-692. 5 helical membrane-spanning segments follow: residues 759 to 779 (VMIA…HPVC), 781 to 801 (LWVT…MAFW), 813 to 833 (LVIC…AFVS), 849 to 869 (LLGY…CVLA), and 882 to 902 (IMFL…PVFL).

It belongs to the patched family. As to expression, expressed in germ cells of the testis (at protein level).

It localises to the cell projection. The protein resides in the cilium. The protein localises to the flagellum membrane. Its subcellular location is the endoplasmic reticulum membrane. Its function is as follows. May play a role in sperm development or sperm function. However, does not appear to have an essential role in spermatogenesis or male fertility. This chain is Patched domain-containing protein 3, found in Rattus norvegicus (Rat).